Consider the following 661-residue polypeptide: MDLQQSTTITSLEKWCLDESLSGCRRHYSVKKKLKLIRVLGLFMGLVAISTVSFSISAFSETDTQSTGEASVVSGPRVAQGYHQRTLLDLNDKILDYTPQPPLSKEGESENSTDHAQGDYPKDIFSLEERRKGAIILHVIGMIYMFIALAIVCDEFFVPSLTVITEKLGISDDVAGATFMAAGGSAPELFTSLIGVFIAHSNVGIGTIVGSAVFNILFVIGMCALFSREILNLTWWPLFRDVSFYIVDLIMLIIFFLDNVIMWWESLLLLTAYFCYVVFMKFNVQVEKWVKQMINRNKVVKVTAPEAQAKPSAARDKDEPTLPAKPRLQRGGSSASLHNSLMRNSIFQLMIHTLDPLAEELGSYGKLKYYDTMTEEGRFREKASILHKIAKKKCHVDENERQNGAANHVEKIELPNSTSTDVEMTPSSDASEPVQNGNLSHNIEGAEAQTADEEEDQPLSLAWPSETRKQVTFLIVFPIVFPLWITLPDVRKPSSRKFFPITFFGSITWIAVFSYLMVWWAHQVGETIGISEEIMGLTILAAGTSIPDLITSVIVARKGLGDMAVSSSVGSNIFDITVGLPLPWLLYTVIHRFQPVAVSSNGLFCAIVLLFIMLLFVILSIALCKWRMNKILGFIMFGLYFVFLVVSVLLEDRILTCPVSI.

The Cytoplasmic segment spans residues 1–38 (MDLQQSTTITSLEKWCLDESLSGCRRHYSVKKKLKLIR). The chain crosses the membrane as a helical span at residues 39-59 (VLGLFMGLVAISTVSFSISAF). The Extracellular segment spans residues 60-132 (SETDTQSTGE…DIFSLEERRK (73 aa)). The tract at residues 99 to 120 (PQPPLSKEGESENSTDHAQGDY) is disordered. A compositionally biased stretch (basic and acidic residues) spans 105–120 (KEGESENSTDHAQGDY). Asn111 is a glycosylation site (N-linked (GlcNAc...) asparagine). A helical transmembrane segment spans residues 133–153 (GAIILHVIGMIYMFIALAIVC). At 154-178 (DEFFVPSLTVITEKLGISDDVAGAT) the chain is on the cytoplasmic side. Residues 174 to 214 (VAGATFMAAGGSAPELFTSLIGVFIAHSNVGIGTIVGSAVF) form an Alpha-1 repeat. A helical membrane pass occupies residues 179 to 199 (FMAAGGSAPELFTSLIGVFIA). Over 200 to 204 (HSNVG) the chain is Extracellular. The chain crosses the membrane as a helical span at residues 205-225 (IGTIVGSAVFNILFVIGMCAL). Over 226 to 243 (FSREILNLTWWPLFRDVS) the chain is Cytoplasmic. Residues 244–264 (FYIVDLIMLIIFFLDNVIMWW) form a helical membrane-spanning segment. Residue Glu265 is a topological domain, extracellular. The helical transmembrane segment at 266 to 286 (SLLLLTAYFCYVVFMKFNVQV) threads the bilayer. At 287–497 (EKWVKQMINR…PDVRKPSSRK (211 aa)) the chain is on the cytoplasmic side. Positions 306-336 (EAQAKPSAARDKDEPTLPAKPRLQRGGSSAS) are disordered. A phosphoserine mark is found at Ser336 and Ser340. The disordered stretch occupies residues 397–439 (DENERQNGAANHVEKIELPNSTSTDVEMTPSSDASEPVQNGNL). Residues 415–439 (PNSTSTDVEMTPSSDASEPVQNGNL) are compositionally biased toward polar residues. The helical transmembrane segment at 498–518 (FFPITFFGSITWIAVFSYLMV) threads the bilayer. Residues 519-533 (WWAHQVGETIGISEE) lie on the Extracellular side of the membrane. The helical transmembrane segment at 534-554 (IMGLTILAAGTSIPDLITSVI) threads the bilayer. One copy of the Alpha-2 repeat lies at 541-572 (AAGTSIPDLITSVIVARKGLGDMAVSSSVGSN). Topologically, residues 555-569 (VARKGLGDMAVSSSV) are cytoplasmic. The helical transmembrane segment at 570–590 (GSNIFDITVGLPLPWLLYTVI) threads the bilayer. Residues 591–602 (HRFQPVAVSSNG) are Extracellular-facing. A helical membrane pass occupies residues 603–623 (LFCAIVLLFIMLLFVILSIAL). Residues 624–630 (CKWRMNK) lie on the Cytoplasmic side of the membrane. Residues 631-651 (ILGFIMFGLYFVFLVVSVLLE) form a helical membrane-spanning segment. The Extracellular portion of the chain corresponds to 652-661 (DRILTCPVSI).

Belongs to the Ca(2+):cation antiporter (CaCA) (TC 2.A.19) family. SLC24A subfamily.

The protein resides in the cell membrane. The catalysed reaction is Ca(2+)(out) + K(+)(out) + 4 Na(+)(in) = Ca(2+)(in) + K(+)(in) + 4 Na(+)(out). Functionally, calcium, potassium:sodium antiporter that transports 1 Ca(2+) and 1 K(+) in exchange for 4 Na(+). Required for learming and memory by regulating neuronal Ca(2+), which is essential for the development of synaptic plasticity. This is Sodium/potassium/calcium exchanger 2 (SLC24A2) from Homo sapiens (Human).